The following is a 238-amino-acid chain: Ribosomal RNA small subunit methyltransferase I (238 aa).

This sequence belongs to the methyltransferase superfamily. RsmI family.

It localises to the cytoplasm. It carries out the reaction cytidine(1402) in 16S rRNA + S-adenosyl-L-methionine = 2'-O-methylcytidine(1402) in 16S rRNA + S-adenosyl-L-homocysteine + H(+). Functionally, catalyzes the 2'-O-methylation of the ribose of cytidine 1402 (C1402) in 16S rRNA. This is Ribosomal RNA small subunit methyltransferase I from Mesomycoplasma conjunctivae (strain ATCC 25834 / NCTC 10147 / HRC/581) (Mycoplasma conjunctivae).